Here is a 136-residue protein sequence, read N- to C-terminus: Large ribosomal subunit protein uL16c (136 aa).

The segment at 1–20 (MLSPKRTRFRKQHRGRMKGK) is disordered.

This sequence belongs to the universal ribosomal protein uL16 family. Part of the 50S ribosomal subunit.

It localises to the plastid. The protein localises to the chloroplast. This chain is Large ribosomal subunit protein uL16c, found in Triticum aestivum (Wheat).